A 95-amino-acid chain; its full sequence is Aspartyl/glutamyl-tRNA(Asn/Gln) amidotransferase subunit C (95 aa).

Belongs to the GatC family. As to quaternary structure, heterotrimer of A, B and C subunits.

The enzyme catalyses L-glutamyl-tRNA(Gln) + L-glutamine + ATP + H2O = L-glutaminyl-tRNA(Gln) + L-glutamate + ADP + phosphate + H(+). It carries out the reaction L-aspartyl-tRNA(Asn) + L-glutamine + ATP + H2O = L-asparaginyl-tRNA(Asn) + L-glutamate + ADP + phosphate + 2 H(+). Its function is as follows. Allows the formation of correctly charged Asn-tRNA(Asn) or Gln-tRNA(Gln) through the transamidation of misacylated Asp-tRNA(Asn) or Glu-tRNA(Gln) in organisms which lack either or both of asparaginyl-tRNA or glutaminyl-tRNA synthetases. The reaction takes place in the presence of glutamine and ATP through an activated phospho-Asp-tRNA(Asn) or phospho-Glu-tRNA(Gln). The polypeptide is Aspartyl/glutamyl-tRNA(Asn/Gln) amidotransferase subunit C (Methylobacterium radiotolerans (strain ATCC 27329 / DSM 1819 / JCM 2831 / NBRC 15690 / NCIMB 10815 / 0-1)).